Reading from the N-terminus, the 212-residue chain is Probable GTP-binding protein EngB (212 aa).

The 175-residue stretch at 23 to 197 (TGIEVAFAGR…ERILDGWFGL (175 aa)) folds into the EngB-type G domain. Residues 31 to 38 (GRSNAGKS), 58 to 62 (GRTQL), 76 to 79 (DLPG), 143 to 146 (TKAD), and 176 to 178 (FSS) each bind GTP. Mg(2+) is bound by residues serine 38 and threonine 60.

It belongs to the TRAFAC class TrmE-Era-EngA-EngB-Septin-like GTPase superfamily. EngB GTPase family. Requires Mg(2+) as cofactor.

Its function is as follows. Necessary for normal cell division and for the maintenance of normal septation. The polypeptide is Probable GTP-binding protein EngB (Alteromonas mediterranea (strain DSM 17117 / CIP 110805 / LMG 28347 / Deep ecotype)).